Here is a 553-residue protein sequence, read N- to C-terminus: HTH-type transcriptional regulator SgrR (553 aa).

The HTH marR-type domain occupies 1–117 (MPSSRLQQQF…LSQIERRFRQ (117 aa)). Positions 26–49 (LQELANVLHCSKRHIRSLLNNMQK) form a DNA-binding region, H-T-H motif. The solute-binding stretch occupies residues 163 to 494 (EPEADLAHHW…NDLSKEVSQW (332 aa)).

Functionally, activates the small RNA gene sgrS under glucose-phosphate stress conditions as well as yfdZ. Represses its own transcription under both stress and non-stress conditions. Might act as a sensor of the intracellular accumulation of phosphoglucose by binding these molecules in its C-terminal solute-binding domain. In Photorhabdus laumondii subsp. laumondii (strain DSM 15139 / CIP 105565 / TT01) (Photorhabdus luminescens subsp. laumondii), this protein is HTH-type transcriptional regulator SgrR.